Here is a 132-residue protein sequence, read N- to C-terminus: Spermatogenesis-associated protein 33 (132 aa).

Residues methionine 1–serine 60 form an interaction with ATG16L1 region. The disordered stretch occupies residues methionine 1–isoleucine 81. The segment covering lysine 24–glutamine 42 has biased composition (basic and acidic residues). The segment at serine 61–glutamate 132 is interaction with VDAC2. The short motif at proline 79 to threonine 84 is the PQIIIT element. A Phosphoserine modification is found at serine 87. The segment at aspartate 110 to glutamate 132 is disordered.

In terms of assembly, interacts (via PQIIIT motif) with PPP3R2 and PPP3CC. Interacts with VDAC2. Interacts with ATG16L1 (via WD repeats). Interacts with PPP3R1, PPP3CA and PPP3CB. In terms of tissue distribution, predominantly expressed in the testis (at protein level). Expressed in the sperm midpiece (at protein level).

Its subcellular location is the cytoplasm. It is found in the cytosol. The protein resides in the nucleus. It localises to the mitochondrion. Plays an important role in sperm motility and male fertility. Required for sperm midpiece flexibility and for the localization of sperm calcineurin to the mitochondria. Promotes mitophagy as well as acts as an autophagy mediator in male germline cells. Links damaged mitochondria to autophagosomes via its binding to the outer mitochondrial membrane protein VDAC2, as well as to key autophagy machinery component ATG16L1. The sequence is that of Spermatogenesis-associated protein 33 (Spata33) from Mus musculus (Mouse).